Here is a 728-residue protein sequence, read N- to C-terminus: FYN-binding protein 2 (728 aa).

Disordered regions lie at residues Gln17 to Pro76, Gln250 to Ile287, and Pro367 to Pro390. Polar residues predominate over residues Gly42–Gln75. Positions Gly276–Pro285 are enriched in pro residues. Residues Ser377 to Pro390 show a composition bias toward basic and acidic residues. The residue at position 491 (Tyr491) is a Phosphotyrosine. The SH2-binding; to LCP2 motif lies at Tyr521 to Val524. The residue at position 587 (Tyr587) is a Phosphotyrosine. Residues Ile664–Gln724 enclose the SH3 domain.

As to quaternary structure, interacts with SKAP1, LCK and FYN. The phosphorylated form interacts with LCP2. Post-translationally, phosphorylation is required for its function in T-cell activation. As to expression, expressed in T-cells (at protein level). Widely expressed.

Its subcellular location is the membrane raft. In terms of biological role, adapter protein that plays a role in T-cell receptor (TCR)-mediated activation of signaling pathways. Required for T-cell activation and integrin-mediated T-cell adhesion in response to TCR stimulation. The chain is FYN-binding protein 2 from Homo sapiens (Human).